Reading from the N-terminus, the 403-residue chain is S-adenosylmethionine synthase (403 aa).

His17 serves as a coordination point for ATP. Residue Asp19 coordinates Mg(2+). A K(+)-binding site is contributed by Glu45. L-methionine contacts are provided by Glu58 and Gln104. Residues Gln104–Thr114 form a flexible loop region. ATP-binding positions include Asp179 to Lys181, Lys250 to Phe251, Asp259, Arg265 to Lys266, Ala282, and Lys286. Residue Asp259 participates in L-methionine binding. Lys290 serves as a coordination point for L-methionine.

The protein belongs to the AdoMet synthase family. In terms of assembly, homotetramer; dimer of dimers. Mg(2+) serves as cofactor. Requires K(+) as cofactor.

The protein localises to the cytoplasm. The enzyme catalyses L-methionine + ATP + H2O = S-adenosyl-L-methionine + phosphate + diphosphate. The protein operates within amino-acid biosynthesis; S-adenosyl-L-methionine biosynthesis; S-adenosyl-L-methionine from L-methionine: step 1/1. In terms of biological role, catalyzes the formation of S-adenosylmethionine (AdoMet) from methionine and ATP. The overall synthetic reaction is composed of two sequential steps, AdoMet formation and the subsequent tripolyphosphate hydrolysis which occurs prior to release of AdoMet from the enzyme. This chain is S-adenosylmethionine synthase, found in Mycobacterium bovis (strain ATCC BAA-935 / AF2122/97).